A 312-amino-acid polypeptide reads, in one-letter code: Olfactory receptor 2H2 (312 aa).

Topologically, residues 1 to 23 (MVNQSSTPGFLLLGFSEHPGLER) are extracellular. N-linked (GlcNAc...) asparagine glycosylation occurs at Asn3. Residues 24–47 (TLFVVVLTSYLLTLVGNTLIILLS) traverse the membrane as a helical segment. Residues 48-55 (ALDPKLHS) are Cytoplasmic-facing. Residues 56-77 (PMYFFLSNLSFLDLCFTTSCVP) form a helical membrane-spanning segment. At 78–98 (QMLVNLWGPKKTISFLDCSVQ) the chain is on the extracellular side. A disulfide bond links Cys95 and Cys187. A helical transmembrane segment spans residues 99-118 (IFIFLSLGTTECILLTVMAF). Over 119–137 (DRYVAVCQPLHYATIIHPR) the chain is Cytoplasmic. A helical transmembrane segment spans residues 138–156 (LCWQLASVAWVIGLVESVV). At 157–193 (QTPSTLHLPFCPDRQVDDFVCEVPALIRLSCEDTSYN) the chain is on the extracellular side. Residues 194 to 217 (EIQVAVASVFILVVPLSLILVSYG) form a helical membrane-spanning segment. The Cytoplasmic portion of the chain corresponds to 218–234 (AITWAVLRINSAKGRRK). A helical membrane pass occupies residues 235-257 (AFGTCSSHLTVVTLFYSSVIAVY). At 258-270 (LQPKNPYAQERGK) the chain is on the extracellular side. A helical transmembrane segment spans residues 271–290 (FFGLFYAVGTPSLNPLIYTL). Over 291 to 312 (RNKEVTRAFRRLLGKEMGLTQS) the chain is Cytoplasmic.

Belongs to the G-protein coupled receptor 1 family.

Its subcellular location is the cell membrane. In terms of biological role, odorant receptor. This is Olfactory receptor 2H2 (OR2H2) from Homo sapiens (Human).